The following is an 841-amino-acid chain: Copper-transporting P-type ATPase (841 aa).

A run of 6 helical transmembrane segments spans residues 186–206 (LWVS…PMLG), 218–238 (ATFI…LPFF), 256–276 (IGLG…APGI), 285–305 (GAAV…VFVG), 445–465 (AVFV…WAAI), and 474–494 (GLLA…GLAT). Aspartate 530 acts as the 4-aspartylphosphate intermediate in catalysis. The next 2 membrane-spanning stretches (helical) occupy residues 602 to 622 (GIAD…DLGI) and 638 to 658 (GKTV…AVAD). Residues aspartate 729 and aspartate 733 each contribute to the Mg(2+) site. The next 2 helical transmembrane spans lie at 742–762 (VGIA…ITLV) and 800–820 (VAAG…IAAA).

Belongs to the cation transport ATPase (P-type) (TC 3.A.3) family. Type IB subfamily.

Its subcellular location is the cell membrane. The catalysed reaction is Cu(2+)(in) + ATP + H2O = Cu(2+)(out) + ADP + phosphate + H(+). Its function is as follows. Involved in copper efflux. The polypeptide is Copper-transporting P-type ATPase (actP) (Rhizobium leguminosarum bv. viciae).